A 1386-amino-acid chain; its full sequence is DNA-directed RNA polymerase subunit beta (1386 aa).

This sequence belongs to the RNA polymerase beta chain family. In terms of assembly, the RNAP catalytic core consists of 2 alpha, 1 beta, 1 beta' and 1 omega subunit. When a sigma factor is associated with the core the holoenzyme is formed, which can initiate transcription.

It catalyses the reaction RNA(n) + a ribonucleoside 5'-triphosphate = RNA(n+1) + diphosphate. Its function is as follows. DNA-dependent RNA polymerase catalyzes the transcription of DNA into RNA using the four ribonucleoside triphosphates as substrates. This is DNA-directed RNA polymerase subunit beta from Nitratiruptor sp. (strain SB155-2).